Consider the following 428-residue polypeptide: Serine--tRNA ligase (428 aa).

L-serine is bound at residue 235–237 (TAE). 266-268 (RSE) is an ATP binding site. E289 provides a ligand contact to L-serine. 353–356 (EISS) is a binding site for ATP. S389 lines the L-serine pocket.

It belongs to the class-II aminoacyl-tRNA synthetase family. Type-1 seryl-tRNA synthetase subfamily. Homodimer. The tRNA molecule binds across the dimer.

The protein localises to the cytoplasm. It catalyses the reaction tRNA(Ser) + L-serine + ATP = L-seryl-tRNA(Ser) + AMP + diphosphate + H(+). The enzyme catalyses tRNA(Sec) + L-serine + ATP = L-seryl-tRNA(Sec) + AMP + diphosphate + H(+). It participates in aminoacyl-tRNA biosynthesis; selenocysteinyl-tRNA(Sec) biosynthesis; L-seryl-tRNA(Sec) from L-serine and tRNA(Sec): step 1/1. Functionally, catalyzes the attachment of serine to tRNA(Ser). Is also able to aminoacylate tRNA(Sec) with serine, to form the misacylated tRNA L-seryl-tRNA(Sec), which will be further converted into selenocysteinyl-tRNA(Sec). This chain is Serine--tRNA ligase, found in Shewanella baltica (strain OS155 / ATCC BAA-1091).